Here is an 81-residue protein sequence, read N- to C-terminus: Photosystem I iron-sulfur center (81 aa).

4Fe-4S ferredoxin-type domains follow at residues 2 to 31 (SHSV…MIPW) and 39 to 68 (IASA…VRVY). 8 residues coordinate [4Fe-4S] cluster: cysteine 11, cysteine 14, cysteine 17, cysteine 21, cysteine 48, cysteine 51, cysteine 54, and cysteine 58.

As to quaternary structure, the eukaryotic PSI reaction center is composed of at least 11 subunits. It depends on [4Fe-4S] cluster as a cofactor.

The protein resides in the plastid. The protein localises to the chloroplast thylakoid membrane. It carries out the reaction reduced [plastocyanin] + hnu + oxidized [2Fe-2S]-[ferredoxin] = oxidized [plastocyanin] + reduced [2Fe-2S]-[ferredoxin]. In terms of biological role, apoprotein for the two 4Fe-4S centers FA and FB of photosystem I (PSI); essential for photochemical activity. FB is the terminal electron acceptor of PSI, donating electrons to ferredoxin. The C-terminus interacts with PsaA/B/D and helps assemble the protein into the PSI complex. Required for binding of PsaD and PsaE to PSI. PSI is a plastocyanin-ferredoxin oxidoreductase, converting photonic excitation into a charge separation, which transfers an electron from the donor P700 chlorophyll pair to the spectroscopically characterized acceptors A0, A1, FX, FA and FB in turn. The sequence is that of Photosystem I iron-sulfur center from Triticum aestivum (Wheat).